The following is a 252-amino-acid chain: Pyridoxine 5'-phosphate synthase (252 aa).

Asn12 is a binding site for 3-amino-2-oxopropyl phosphate. 1-deoxy-D-xylulose 5-phosphate is bound at residue 14–15 (DH). Arg23 contributes to the 3-amino-2-oxopropyl phosphate binding site. His48 (proton acceptor) is an active-site residue. 1-deoxy-D-xylulose 5-phosphate is bound by residues Arg50 and His55. Residue Glu75 is the Proton acceptor of the active site. Thr105 lines the 1-deoxy-D-xylulose 5-phosphate pocket. His199 serves as the catalytic Proton donor. 3-amino-2-oxopropyl phosphate is bound by residues Gly200 and 221 to 222 (GH).

This sequence belongs to the PNP synthase family. Homooctamer; tetramer of dimers.

The protein localises to the cytoplasm. It catalyses the reaction 3-amino-2-oxopropyl phosphate + 1-deoxy-D-xylulose 5-phosphate = pyridoxine 5'-phosphate + phosphate + 2 H2O + H(+). Its pathway is cofactor biosynthesis; pyridoxine 5'-phosphate biosynthesis; pyridoxine 5'-phosphate from D-erythrose 4-phosphate: step 5/5. In terms of biological role, catalyzes the complicated ring closure reaction between the two acyclic compounds 1-deoxy-D-xylulose-5-phosphate (DXP) and 3-amino-2-oxopropyl phosphate (1-amino-acetone-3-phosphate or AAP) to form pyridoxine 5'-phosphate (PNP) and inorganic phosphate. The polypeptide is Pyridoxine 5'-phosphate synthase (Cereibacter sphaeroides (strain ATCC 17029 / ATH 2.4.9) (Rhodobacter sphaeroides)).